Here is a 156-residue protein sequence, read N- to C-terminus: MSRKNRAPKRDVLPDPLYNSQLVTRLINRVMLDGKRGTAASIVYGAFEQIKEATGNDALEVFETAMENIMPVLEVRARRVGGSNYQVPVEVRPERRTTLGLRWLVTIARLRGEHTMQDRLAKEILDAANNTGAAVKKREDTHRMAEANRAFAHFRW.

This sequence belongs to the universal ribosomal protein uS7 family. As to quaternary structure, part of the 30S ribosomal subunit. Contacts proteins S9 and S11.

One of the primary rRNA binding proteins, it binds directly to 16S rRNA where it nucleates assembly of the head domain of the 30S subunit. Is located at the subunit interface close to the decoding center, probably blocks exit of the E-site tRNA. This Streptococcus pneumoniae (strain Taiwan19F-14) protein is Small ribosomal subunit protein uS7.